Reading from the N-terminus, the 267-residue chain is Thiamine thiazole synthase (267 aa).

NAD(+)-binding positions include serine 47, 66–67 (ER), glycine 74, valine 138, and 164–166 (HID). Fe cation is bound by residues aspartate 166 and histidine 181. NAD(+) is bound by residues serine 184 and methionine 230. A glycine-binding site is contributed by arginine 240.

This sequence belongs to the THI4 family. In terms of assembly, homooctamer; tetramer of dimers. The cofactor is Fe(2+).

The enzyme catalyses hydrogen sulfide + glycine + NAD(+) = ADP-5-ethyl-4-methylthiazole-2-carboxylate + nicotinamide + 3 H2O + H(+). Its pathway is cofactor biosynthesis; thiamine diphosphate biosynthesis. Involved in the biosynthesis of the thiazole moiety of thiamine. Catalyzes the conversion of NAD and glycine to adenosine diphosphate 5-(2-hydroxyethyl)-4-methylthiazole-2-carboxylate (ADT), an adenylated thiazole intermediate, using free sulfide as a source of sulfur. In Methanocaldococcus jannaschii (strain ATCC 43067 / DSM 2661 / JAL-1 / JCM 10045 / NBRC 100440) (Methanococcus jannaschii), this protein is Thiamine thiazole synthase.